A 436-amino-acid polypeptide reads, in one-letter code: Serine protease inhibitor A6 (436 aa).

The signal sequence occupies residues 1–16; that stretch reads MHLLVYLSLFFALALA. Residues 26–60 form a disordered region; sequence KHRHRHEQQGHHDSAKHGHQKDKQQQEQIKNDEGK. Over residues 32–60 the composition is skewed to basic and acidic residues; sequence EQQGHHDSAKHGHQKDKQQQEQIKNDEGK. Residues Asn260 and Asn289 are each glycosylated (N-linked (GlcNAc...) asparagine).

Belongs to the serpin family. In terms of tissue distribution, liver.

It is found in the secreted. It localises to the extracellular space. Its function is as follows. Not yet known. In Xenopus laevis (African clawed frog), this protein is Serine protease inhibitor A6 (serpina6).